Here is a 290-residue protein sequence, read N- to C-terminus: Fructose-1,6-bisphosphatase class 1 (290 aa).

4 residues coordinate Mg(2+): E78, D96, L98, and D99. Substrate-binding positions include 99 to 102, Y201, and K226; that span reads DGSS. Residue E232 participates in Mg(2+) binding.

It belongs to the FBPase class 1 family. In terms of assembly, homotetramer. The cofactor is Mg(2+).

The protein localises to the cytoplasm. It catalyses the reaction beta-D-fructose 1,6-bisphosphate + H2O = beta-D-fructose 6-phosphate + phosphate. Its pathway is carbohydrate biosynthesis; gluconeogenesis. The sequence is that of Fructose-1,6-bisphosphatase class 1 from Helicobacter pylori (strain ATCC 700392 / 26695) (Campylobacter pylori).